The following is a 167-amino-acid chain: Aphrodisin (167 aa).

The N-terminal stretch at 1–16 (MVKILLLALVFSLAHA) is a signal peptide. Glutamine 17 carries the post-translational modification Pyrrolidone carboxylic acid. Cystine bridges form between cysteine 54-cysteine 58 and cysteine 73-cysteine 165. 2 N-linked (GlcNAc...) asparagine glycosylation sites follow: asparagine 57 and asparagine 85.

It belongs to the calycin superfamily. Lipocalin family. Expressed in the vagina, uterus, and Bartholin's glands of female hamsters. Secreted in vaginal discharge.

Its subcellular location is the secreted. Acts as an aphrodisiac pheromone, reliably eliciting copulatory behavior from male hamster. This chain is Aphrodisin, found in Cricetus cricetus (Black-bellied hamster).